An 821-amino-acid polypeptide reads, in one-letter code: Kinetochore protein SLK19 (821 aa).

2 disordered regions span residues 1–52 and 99–153; these read MNEV…SQFV and FDDK…NDKE. Position 7 is a phosphothreonine; by CDC28 (Thr7). The segment covering 15 to 51 has biased composition (polar residues); that stretch reads QAQQREQNSENCSQERNPRTFNSEPDSSFNSPGSSQF. Basic and acidic residues-rich tracts occupy residues 99–122 and 136–153; these read FDDKKSDSGTNDDKGGASTSDKHV and SSEKRSDKNVDVDENDKE. A phosphoserine mark is found at Ser188 and Ser189. Ser201 carries the phosphoserine; by CDC28 modification. Phosphoserine is present on Ser216. Residue Thr273 is modified to Phosphothreonine. Disordered stretches follow at residues 274-298 and 699-720; these read PLYETSARESNSNEEGRNDYDDDNQ and EQNNNNNNSVTLSNDQKDRDDE. Residue Ser283 is modified to Phosphoserine. Residues 310–821 adopt a coiled-coil conformation; that stretch reads AKRNEELTDQ…LLKLLENEKK (512 aa).

In terms of processing, cleaved by ESP1 at the onset of anaphase. Phosphorylated by CDC5/Polo-like kinase at the onset of anaphase. Phosphorylation takes places at proximity to cleavage sites and is required for an efficient cleavage by ESP1. Phosphorylated also by CDC28.

The protein localises to the chromosome. The protein resides in the centromere. It is found in the kinetochore. Its subcellular location is the cytoplasm. It localises to the cytoskeleton. The protein localises to the microtubule organizing center. The protein resides in the spindle pole body. Has a role in spindle assembly and stability. Required to ensure a timely exit form mitosis. Essential to maintain pre-anaphase spindle polarity. Associates to the plus ends of the microtubules at the kinetochore and spindle midzone. A component of the FEAR (CDC14 Early Anaphase Release) network which promotes CDC14 release from the nucleolus during early anaphase. Required for proper chromosome segregation during meiosis I where it prevents premature sister chromatid separation. This chain is Kinetochore protein SLK19 (SLK19), found in Saccharomyces cerevisiae (strain ATCC 204508 / S288c) (Baker's yeast).